The following is a 254-amino-acid chain: Alcohol dehydrogenase (254 aa).

10-33 (FVAGLGGIGLDTSREIVKSGPKNL) is a binding site for NAD(+). Residue S138 coordinates substrate. The active-site Proton acceptor is the Y151.

The protein belongs to the short-chain dehydrogenases/reductases (SDR) family. Homodimer.

The enzyme catalyses a primary alcohol + NAD(+) = an aldehyde + NADH + H(+). The catalysed reaction is a secondary alcohol + NAD(+) = a ketone + NADH + H(+). This is Alcohol dehydrogenase (Adh) from Drosophila adiastola (Fruit fly).